A 348-amino-acid chain; its full sequence is Protein RecA (348 aa).

65–72 (GPESSGKT) serves as a coordination point for ATP. The segment covering 326-336 (LLTPAEEKPET) has biased composition (basic and acidic residues). Positions 326-348 (LLTPAEEKPETDAAPEIEENEEF) are disordered. Residues 338–348 (AAPEIEENEEF) show a composition bias toward acidic residues.

It belongs to the RecA family.

It localises to the cytoplasm. Functionally, can catalyze the hydrolysis of ATP in the presence of single-stranded DNA, the ATP-dependent uptake of single-stranded DNA by duplex DNA, and the ATP-dependent hybridization of homologous single-stranded DNAs. It interacts with LexA causing its activation and leading to its autocatalytic cleavage. This Aliivibrio fischeri (strain ATCC 700601 / ES114) (Vibrio fischeri) protein is Protein RecA.